Consider the following 117-residue polypeptide: Immunoglobulin heavy variable 3-30-3 (117 aa).

Residues 1-19 (MEFGLSWVFLVALLRGVQC) form the signal peptide. Position 20 is a pyrrolidone carboxylic acid (Gln20). Residues 20–44 (QVQLVESGGGVVQPGRSLRLSCAAS) are framework-1. The region spanning 20 to 117 (QVQLVESGGG…EDTAVYYCAR (98 aa)) is the Ig-like domain. Cys41 and Cys115 form a disulfide bridge. Residues 45–52 (GFTFSSYA) form a complementarity-determining-1 region. Positions 53 to 69 (MHWVRQAPGKGLEWVAV) are framework-2. Residues 70-77 (ISYDGSNK) are complementarity-determining-2. The interval 78 to 115 (YYADSVKGRFTISRDNSKNTLYLQMNSLRAEDTAVYYC) is framework-3. Positions 116–117 (AR) are complementarity-determining-3.

Immunoglobulins are composed of two identical heavy chains and two identical light chains; disulfide-linked.

It is found in the secreted. Its subcellular location is the cell membrane. In terms of biological role, v region of the variable domain of immunoglobulin heavy chains that participates in the antigen recognition. Immunoglobulins, also known as antibodies, are membrane-bound or secreted glycoproteins produced by B lymphocytes. In the recognition phase of humoral immunity, the membrane-bound immunoglobulins serve as receptors which, upon binding of a specific antigen, trigger the clonal expansion and differentiation of B lymphocytes into immunoglobulins-secreting plasma cells. Secreted immunoglobulins mediate the effector phase of humoral immunity, which results in the elimination of bound antigens. The antigen binding site is formed by the variable domain of one heavy chain, together with that of its associated light chain. Thus, each immunoglobulin has two antigen binding sites with remarkable affinity for a particular antigen. The variable domains are assembled by a process called V-(D)-J rearrangement and can then be subjected to somatic hypermutations which, after exposure to antigen and selection, allow affinity maturation for a particular antigen. The sequence is that of Immunoglobulin heavy variable 3-30-3 from Homo sapiens (Human).